The primary structure comprises 117 residues: Protein Wnt-6 (117 aa).

The O-palmitoleoyl serine; by PORCN moiety is linked to residue S1. A disulfide bridge connects residues C83 and C98. N84 is a glycosylation site (N-linked (GlcNAc...) asparagine).

Belongs to the Wnt family. Post-translationally, palmitoleoylation is required for efficient binding to frizzled receptors. Depalmitoleoylation leads to Wnt signaling pathway inhibition.

Its subcellular location is the secreted. The protein resides in the extracellular space. It is found in the extracellular matrix. Its function is as follows. Ligand for members of the frizzled family of seven transmembrane receptors. Probable developmental protein. May be a signaling molecule which affects the development of discrete regions of tissues. Is likely to signal over only few cell diameters. The polypeptide is Protein Wnt-6 (wnt6) (Thunnus thynnus (Atlantic bluefin tuna)).